The sequence spans 457 residues: Peptidyl-prolyl cis-trans isomerase FKBP5 (457 aa).

M1 bears the N-acetylmethionine mark. The segment at 1-26 (MTTDEGAKNNGESPTATVAEQGEDIT) is disordered. The residue at position 13 (S13) is a Phosphoserine. 2 PPIase FKBP-type domains span residues 50 to 138 (GDKV…LDFK) and 165 to 251 (GATV…KSFE). 3 TPR repeats span residues 268-301 (AAIVKEKGTVYFKGGKYMQAVIQYGKIVSWLEME), 317-350 (LAAFLNLAMCYSKLREYTKAVECCDKALGLDSAN), and 351-384 (GKGLYRRGEAQLLMNEFESAKGDFEKVLEVNPQN). A disordered region spans residues 420–457 (DAKEEANKAMGKKTSEGVTNEKGTDSQAMEEEKPEGHV). S445 carries the post-translational modification Phosphoserine.

In terms of assembly, part of a heteromultimeric cytoplasmic complex with HSP90AA1, HSPA1A/HSPA1B and steroid receptors. Upon ligand binding dissociates from the complex and FKBP4 takes its place. Interacts with functionally mature heterooligomeric progesterone receptor complexes along with HSP90 and TEBP. Interacts with IFI44L; this interaction modulates the kinase activity of IKBKB and IKBKE. Interacts with IKBKB and IKBKE.

Its subcellular location is the cytoplasm. It is found in the nucleus. The catalysed reaction is [protein]-peptidylproline (omega=180) = [protein]-peptidylproline (omega=0). With respect to regulation, inhibited by FK506 but not cyclosporin. Its function is as follows. Immunophilin protein with PPIase and co-chaperone activities. Component of unligated steroid receptors heterocomplexes through interaction with heat-shock protein 90 (HSP90). Plays a role in the intracellular trafficking of heterooligomeric forms of steroid hormone receptors maintaining the complex into the cytoplasm when unliganded. Acts as a regulator of Akt/AKT1 activity by promoting the interaction between Akt/AKT1 and PHLPP1, thereby enhancing dephosphorylation and subsequent activation of Akt/AKT1. Interacts with IKBKE and IKBKB which facilitates IKK complex assembly leading to increased IKBKE and IKBKB kinase activity, NF-kappaB activation, and IFN production. This is Peptidyl-prolyl cis-trans isomerase FKBP5 (FKBP5) from Pongo abelii (Sumatran orangutan).